Here is a 607-residue protein sequence, read N- to C-terminus: Guanine nucleotide-binding protein-like 1 (607 aa).

Over residues 1–14 (MPRKKPFSVKQKKK) the composition is skewed to basic residues. A disordered region spans residues 1-81 (MPRKKPFSVK…GPRGYDPNRY (81 aa)). Residues 15-26 (QLQDKRERKRGL) show a composition bias toward basic and acidic residues. Phosphoserine occurs at positions 32, 33, and 34. Residues Thr48 and Thr50 each carry the phosphothreonine modification. Phosphoserine is present on residues Ser51 and Ser68. In terms of domain architecture, CP-type G spans 178-418 (WRQLWRVLEM…LCDCPGLIFP (241 aa)). Residue 225-228 (NKVD) participates in GTP binding. Residue Ser324 is modified to Phosphoserine. GTP contacts are provided by residues 367-374 (GFPNVGKS) and 411-415 (DCPGL). The segment at 544 to 607 (GRVGPAGDEE…PYALLGEDEC (64 aa)) is disordered. Residues 550-585 (GDEEEEEEEELSSSCEEEGEEDRDADEEGEGDEDTP) are compositionally biased toward acidic residues. Ser561, Ser562, and Ser563 each carry phosphoserine.

This sequence belongs to the TRAFAC class YlqF/YawG GTPase family.

Its function is as follows. Possible regulatory or functional link with the histocompatibility cluster. This chain is Guanine nucleotide-binding protein-like 1 (Gnl1), found in Mus musculus (Mouse).